We begin with the raw amino-acid sequence, 246 residues long: Homeobox protein SIX6 (246 aa).

The homeobox DNA-binding region spans 128-187 (GEQKTHCFKERTRHLLREWYLQDPYPNPSKKRELAQATGLTPTQVGNWFKNRRQRDRAAA). The disordered stretch occupies residues 190–246 (NRLQQQVLSQGSGRALRAEGDGTPEVLGVATSPAASLSSKAATSAISITSSDSECDI). A compositionally biased stretch (polar residues) spans 191 to 201 (RLQQQVLSQGS). Residue Thr212 is modified to Phosphothreonine. Low complexity predominate over residues 219–246 (ATSPAASLSSKAATSAISITSSDSECDI). Ser221, Ser225, Ser227, and Ser228 each carry phosphoserine.

This sequence belongs to the SIX/Sine oculis homeobox family. As to quaternary structure, interacts with TLE4 and TLE5. In terms of tissue distribution, expressed in the developing and adult retina. Also expressed in the hypothalamic and the pituitary regions.

It localises to the nucleus. Its function is as follows. May be involved in eye development. The protein is Homeobox protein SIX6 (SIX6) of Homo sapiens (Human).